A 560-amino-acid chain; its full sequence is Arginine--tRNA ligase (560 aa).

Positions 121 to 131 (PNIAKPFSMGH) match the 'HIGH' region motif.

This sequence belongs to the class-I aminoacyl-tRNA synthetase family. Monomer.

The protein localises to the cytoplasm. It catalyses the reaction tRNA(Arg) + L-arginine + ATP = L-arginyl-tRNA(Arg) + AMP + diphosphate. The polypeptide is Arginine--tRNA ligase (Exiguobacterium sibiricum (strain DSM 17290 / CCUG 55495 / CIP 109462 / JCM 13490 / 255-15)).